A 98-amino-acid chain; its full sequence is Large ribosomal subunit protein uL23 (98 aa).

It belongs to the universal ribosomal protein uL23 family. As to quaternary structure, part of the 50S ribosomal subunit. Contacts protein L29, and trigger factor when it is bound to the ribosome.

Its function is as follows. One of the early assembly proteins it binds 23S rRNA. One of the proteins that surrounds the polypeptide exit tunnel on the outside of the ribosome. Forms the main docking site for trigger factor binding to the ribosome. The protein is Large ribosomal subunit protein uL23 of Methylorubrum extorquens (strain CM4 / NCIMB 13688) (Methylobacterium extorquens).